Here is an 86-residue protein sequence, read N- to C-terminus: OMEGA-stichotoxin-Shd4a (86 aa).

An N-terminal signal peptide occupies residues 1–23 (MASFRTLFACVVILCCVLWSSMA). Residues 24–36 (RYGEDMEVETEMN) constitute a propeptide that is removed on maturation. The EGF-like domain occupies 40 to 82 (EGVRCTGQHASSFCLNGGTCRHIASLGEYYCICPGDYTGHRCD). 3 disulfide bridges follow: Cys-44–Cys-59, Cys-53–Cys-70, and Cys-72–Cys-81.

The protein belongs to the EGF domain peptide family.

The protein localises to the secreted. It localises to the nematocyst. Has both toxic and EGF activity. Its EGF activity consists of rounding cells (morphological change) and inducing tyrosine phosphorylation of the EGFR in A431 cells, but with a lower potency that human EGF. This Stichodactyla haddoni (Saddle carpet anemone) protein is OMEGA-stichotoxin-Shd4a.